We begin with the raw amino-acid sequence, 669 residues long: Threonine--tRNA ligase (669 aa).

Positions 3–60 (DAQQITLIVDGEETKVTEGTTGAELFFERRDVVVARVNGVLKDLDQVLTEGADVEGVT) constitute a TGS domain. The interval 260–566 (DHRKLGVELD…LTEHYAGAFP (307 aa)) is catalytic. Zn(2+)-binding residues include C365, H416, and H543.

Belongs to the class-II aminoacyl-tRNA synthetase family. As to quaternary structure, homodimer. The cofactor is Zn(2+).

The protein resides in the cytoplasm. It carries out the reaction tRNA(Thr) + L-threonine + ATP = L-threonyl-tRNA(Thr) + AMP + diphosphate + H(+). In terms of biological role, catalyzes the attachment of threonine to tRNA(Thr) in a two-step reaction: L-threonine is first activated by ATP to form Thr-AMP and then transferred to the acceptor end of tRNA(Thr). Also edits incorrectly charged L-seryl-tRNA(Thr). This is Threonine--tRNA ligase from Paenarthrobacter aurescens (strain TC1).